The chain runs to 476 residues: MKVSLPAFEKAKVLVVGDVMLDRYWVGPTGRISPEAPVPVVKINQVEDRPGGAANVALNIATLGGQVQLAGLVGEDDTAKALTLGVQALGVEPQWLKIADKPTITKLRVLSRNQQLIRLDFEESFDKQDSARLLKQSEALLDSVDVVVLSDYAKGAIDKPQDFIALARAKGVKVLVDPKGSDFSRYHGASLITPNMSEFEAVVGAVTSEADLLEKARGLLNKHQFDAILVTRSEKGMTLVTANAPELHIPTVAREVYDVTGAGDTVISALATSLAAGAELPQACAIANTAAGVVVGKLGTSTVSRIELIEALALHHGESGFGVVSEDQLAYALEQAKLRGERVVMTNGCFDILHAGHVSYLKQAKALGDRLIVAVNDDASVKRLKGEGRPVNQVDRRMAVLAGLAAVDWVVPFSEDTPQRIIARLLPDLLVKGGDYKIEDIAGGAEVIAAGGQVQVLGFEDGISTTAIIQNIMAKQ.

Residues 1 to 319 (MKVSLPAFEK…EALALHHGES (319 aa)) form a ribokinase region. Residue 195–198 (NMSE) coordinates ATP. The active site involves Asp-264. The tract at residues 345 to 476 (MTNGCFDILH…AIIQNIMAKQ (132 aa)) is cytidylyltransferase.

It in the N-terminal section; belongs to the carbohydrate kinase PfkB family. This sequence in the C-terminal section; belongs to the cytidylyltransferase family. Homodimer.

The enzyme catalyses D-glycero-beta-D-manno-heptose 7-phosphate + ATP = D-glycero-beta-D-manno-heptose 1,7-bisphosphate + ADP + H(+). The catalysed reaction is D-glycero-beta-D-manno-heptose 1-phosphate + ATP + H(+) = ADP-D-glycero-beta-D-manno-heptose + diphosphate. It participates in nucleotide-sugar biosynthesis; ADP-L-glycero-beta-D-manno-heptose biosynthesis; ADP-L-glycero-beta-D-manno-heptose from D-glycero-beta-D-manno-heptose 7-phosphate: step 1/4. The protein operates within nucleotide-sugar biosynthesis; ADP-L-glycero-beta-D-manno-heptose biosynthesis; ADP-L-glycero-beta-D-manno-heptose from D-glycero-beta-D-manno-heptose 7-phosphate: step 3/4. Its function is as follows. Catalyzes the phosphorylation of D-glycero-D-manno-heptose 7-phosphate at the C-1 position to selectively form D-glycero-beta-D-manno-heptose-1,7-bisphosphate. Functionally, catalyzes the ADP transfer from ATP to D-glycero-beta-D-manno-heptose 1-phosphate, yielding ADP-D-glycero-beta-D-manno-heptose. The chain is Bifunctional protein HldE from Shewanella sp. (strain MR-4).